Reading from the N-terminus, the 433-residue chain is Enolase 2 (433 aa).

The interval 34-56 is disordered; that stretch reads RGMVPSGASTGEHEAVELRDGDK. The segment covering 44-56 has biased composition (basic and acidic residues); the sequence is GEHEAVELRDGDK. Gln-163 lines the (2R)-2-phosphoglycerate pocket. Glu-205 (proton donor) is an active-site residue. Asp-243, Glu-290, and Asp-317 together coordinate Mg(2+). Lys-342, Arg-371, Ser-372, and Lys-393 together coordinate (2R)-2-phosphoglycerate. Catalysis depends on Lys-342, which acts as the Proton acceptor.

Belongs to the enolase family. Mg(2+) is required as a cofactor.

It localises to the cytoplasm. The protein localises to the secreted. It is found in the cell surface. It carries out the reaction (2R)-2-phosphoglycerate = phosphoenolpyruvate + H2O. It functions in the pathway carbohydrate degradation; glycolysis; pyruvate from D-glyceraldehyde 3-phosphate: step 4/5. Its function is as follows. Catalyzes the reversible conversion of 2-phosphoglycerate (2-PG) into phosphoenolpyruvate (PEP). It is essential for the degradation of carbohydrates via glycolysis. This chain is Enolase 2, found in Lactococcus lactis subsp. cremoris (strain SK11).